The primary structure comprises 489 residues: Betaine aldehyde dehydrogenase (489 aa).

K(+) is bound by residues T26 and D93. 150–152 (GAW) contacts NAD(+). The active-site Charge relay system is K162. NAD(+) is bound at residue 176 to 179 (KPSE). Position 180 (V180) interacts with K(+). Residue 229–232 (GVET) coordinates NAD(+). L245 serves as a coordination point for K(+). The active-site Proton acceptor is the E251. NAD(+)-binding residues include G253, C285, and E386. C285 serves as the catalytic Nucleophile. A Cysteine sulfenic acid (-SOH) modification is found at C285. K(+)-binding residues include K456 and G459. E463 acts as the Charge relay system in catalysis.

Belongs to the aldehyde dehydrogenase family. As to quaternary structure, dimer of dimers. K(+) is required as a cofactor.

The enzyme catalyses betaine aldehyde + NAD(+) + H2O = glycine betaine + NADH + 2 H(+). It functions in the pathway amine and polyamine biosynthesis; betaine biosynthesis via choline pathway; betaine from betaine aldehyde: step 1/1. Functionally, involved in the biosynthesis of the osmoprotectant glycine betaine. Catalyzes the irreversible oxidation of betaine aldehyde to the corresponding acid. In Burkholderia multivorans (strain ATCC 17616 / 249), this protein is Betaine aldehyde dehydrogenase.